Reading from the N-terminus, the 481-residue chain is MTQYTLKQASVLLQSKQISAVELASAYLAAIAEKNPALNGYITIDQDKTLAEARAADERIAQGNASALTGVPVAYKDIFCQTGWRSACASKMLDNFISPYTATVVQNLLDEGMVTLGRTNMDEFAMGSTNENSFYGAAKNPWNLEHVPGGSSGGSAAVVAARLAPAALGSDTGGSIRQPASHCGITGIKPTYGTVSRFGMVAYASSFDQTGPMAQTAEDCAILLNAMAGFDPKDSTSLEREKEDYTRDLNQPLKGLKIGLPKEYFGEGNSADVLTALQNTIDLLKAQGAELIEVSLPQTKLSIPAYYVLASAEASTNLSRYDGVRYGHRAAQFADLEEMYGKTRAEGFGSEVKRRIMIGTYVLSHGYYDAYYLKAQKLRRLVADDFQTAFARCDLILAPTAPTAAPKIGADASPVETYLSDIYTIAVNLAGLPALTLPAGFSGGGLPVGVQLVGNYFAEAKILGAAHQIQLNSDWHGKRPE.

Active-site charge relay system residues include K76 and S151. S175 (acyl-ester intermediate) is an active-site residue.

It belongs to the amidase family. GatA subfamily. As to quaternary structure, heterotrimer of A, B and C subunits.

It catalyses the reaction L-glutamyl-tRNA(Gln) + L-glutamine + ATP + H2O = L-glutaminyl-tRNA(Gln) + L-glutamate + ADP + phosphate + H(+). Functionally, allows the formation of correctly charged Gln-tRNA(Gln) through the transamidation of misacylated Glu-tRNA(Gln) in organisms which lack glutaminyl-tRNA synthetase. The reaction takes place in the presence of glutamine and ATP through an activated gamma-phospho-Glu-tRNA(Gln). The polypeptide is Glutamyl-tRNA(Gln) amidotransferase subunit A (Neisseria meningitidis serogroup B (strain ATCC BAA-335 / MC58)).